A 437-amino-acid chain; its full sequence is tRNA pseudouridine synthase Pus10 (437 aa).

In terms of domain architecture, THUMP spans 76–198 (VARDVVEHLS…GGGVDIQVNS (123 aa)). Aspartate 253 serves as the catalytic Nucleophile. Substrate is bound by residues tyrosine 321 and tyrosine 394.

It belongs to the pseudouridine synthase Pus10 family.

It catalyses the reaction uridine(54) in tRNA = pseudouridine(54) in tRNA. The enzyme catalyses uridine(55) in tRNA = pseudouridine(55) in tRNA. Its function is as follows. Responsible for synthesis of pseudouridine from uracil-54 and uracil-55 in the psi GC loop of transfer RNAs. This Aeropyrum pernix (strain ATCC 700893 / DSM 11879 / JCM 9820 / NBRC 100138 / K1) protein is tRNA pseudouridine synthase Pus10.